Here is a 119-residue protein sequence, read N- to C-terminus: Acidic phospholipase A2 natratoxin (119 aa).

7 cysteine pairs are disulfide-bonded: Cys-11–Cys-71, Cys-26–Cys-118, Cys-28–Cys-44, Cys-43–Cys-99, Cys-50–Cys-92, Cys-60–Cys-85, and Cys-78–Cys-90. Residues Tyr-27, Gly-29, and Gly-31 each contribute to the Ca(2+) site. The active site involves His-47. A Ca(2+)-binding site is contributed by Asp-48. Residue Asp-93 is part of the active site.

It belongs to the phospholipase A2 family. Group I subfamily. D49 sub-subfamily. Ca(2+) serves as cofactor. Expressed by the venom gland.

The protein resides in the secreted. The catalysed reaction is a 1,2-diacyl-sn-glycero-3-phosphocholine + H2O = a 1-acyl-sn-glycero-3-phosphocholine + a fatty acid + H(+). Functionally, snake venom phospholipase A2 (PLA2) that has an effectively inhibitory effect on A-type K(+) currents (Kv/KCN) in acutely dissociated rat dorsal root ganglion (DRG) neurons. This inhibitory effect is independent of its enzymatic activity. PLA2 catalyzes the calcium-dependent hydrolysis of the 2-acyl groups in 3-sn-phosphoglycerides. The chain is Acidic phospholipase A2 natratoxin from Naja atra (Chinese cobra).